We begin with the raw amino-acid sequence, 729 residues long: Fatty acid oxidation complex subunit alpha (729 aa).

The interval 1-189 is enoyl-CoA hydratase/isomerase; the sequence is MLYKGDTLYL…KIGLVDGVVK (189 aa). Asp296 contributes to the substrate binding site. The tract at residues 311-729 is 3-hydroxyacyl-CoA dehydrogenase; the sequence is ETPKHAAVLG…ARPVGELKTA (419 aa). NAD(+)-binding positions include Met324, Asp343, 400–402, Lys407, and Ser429; that span reads VVE. The active-site For 3-hydroxyacyl-CoA dehydrogenase activity is the His450. Asn453 contacts NAD(+). The substrate site is built by Asn500 and Tyr660.

The protein in the N-terminal section; belongs to the enoyl-CoA hydratase/isomerase family. In the C-terminal section; belongs to the 3-hydroxyacyl-CoA dehydrogenase family. Heterotetramer of two alpha chains (FadB) and two beta chains (FadA).

The catalysed reaction is a (3S)-3-hydroxyacyl-CoA + NAD(+) = a 3-oxoacyl-CoA + NADH + H(+). It carries out the reaction a (3S)-3-hydroxyacyl-CoA = a (2E)-enoyl-CoA + H2O. The enzyme catalyses a 4-saturated-(3S)-3-hydroxyacyl-CoA = a (3E)-enoyl-CoA + H2O. It catalyses the reaction (3S)-3-hydroxybutanoyl-CoA = (3R)-3-hydroxybutanoyl-CoA. The catalysed reaction is a (3Z)-enoyl-CoA = a 4-saturated (2E)-enoyl-CoA. It carries out the reaction a (3E)-enoyl-CoA = a 4-saturated (2E)-enoyl-CoA. Its pathway is lipid metabolism; fatty acid beta-oxidation. Functionally, involved in the aerobic and anaerobic degradation of long-chain fatty acids via beta-oxidation cycle. Catalyzes the formation of 3-oxoacyl-CoA from enoyl-CoA via L-3-hydroxyacyl-CoA. It can also use D-3-hydroxyacyl-CoA and cis-3-enoyl-CoA as substrate. The polypeptide is Fatty acid oxidation complex subunit alpha (Enterobacter cloacae).